The primary structure comprises 1259 residues: Protein flightless-1 homolog (1259 aa).

15 LRR repeats span residues 7 to 32 (LPFI…VKSM), 33 to 55 (TSLR…LASL), 56 to 78 (QKLE…LSSL), 80 to 103 (NLRA…IFQL), 104 to 126 (DDLS…LENS), 128 to 149 (NMLV…LFIN), 150 to 173 (LTDL…MRRL), 176 to 201 (LQTL…VSLQ), 222 to 245 (LSNL…LYSL), 247 to 268 (NLKR…IDQW), 269 to 291 (TKLE…ICKL), 293 to 316 (KLKK…VGKL), 317 to 339 (SNLV…LCRC), 340 to 363 (GKLK…HFLT), and 365 to 385 (LEVL…PVDR). 4 Gelsolin-like repeats span residues 509 to 589 (IPIQ…SEEF), 628 to 702 (NIRL…PEFW), 757 to 830 (DVVP…CQVF), and 1170 to 1225 (EKCS…RSKD).

In terms of tissue distribution, expressed in ventricular cardiomyocytes, where it particularly localizes to intercalated disks and costamere-like structures (at protein level).

It localises to the nucleus. It is found in the cytoplasm. The protein resides in the cytoskeleton. The protein localises to the microtubule organizing center. Its subcellular location is the centrosome. It localises to the cell junction. It is found in the focal adhesion. In terms of biological role, is a regulator of actin polymerization, required for proper myofibril organization and the assembly of cardiomyocyte cell adhesion complexes. Is a regulator of the length of sarcomeric thin filaments. Regulates cytoskeletal rearrangements involved in cytokinesis and cell migration, by inhibiting Rac1-dependent paxillin phosphorylation. May play a role as coactivator in transcriptional activation by hormone-activated nuclear receptors (NR) and acts in cooperation with NCOA2 and CARM1. Involved in estrogen hormone signaling. This chain is Protein flightless-1 homolog, found in Danio rerio (Zebrafish).